Consider the following 29-residue polypeptide: Trypsin inhibitor 5 (29 aa).

3 cysteine pairs are disulfide-bonded: Cys-3/Cys-20, Cys-10/Cys-22, and Cys-16/Cys-28.

This sequence belongs to the protease inhibitor I7 (squash-type serine protease inhibitor) family.

It localises to the secreted. Its function is as follows. Strongly inhibits trypsin, weakly inhibits chymotrypsin. In Cyclanthera pedata (Achocha), this protein is Trypsin inhibitor 5.